We begin with the raw amino-acid sequence, 208 residues long: Thymidylate kinase (208 aa).

An ATP-binding site is contributed by 10–17 (GPEGSGKT).

This sequence belongs to the thymidylate kinase family.

The enzyme catalyses dTMP + ATP = dTDP + ADP. Phosphorylation of dTMP to form dTDP in both de novo and salvage pathways of dTTP synthesis. This is Thymidylate kinase from Bacillus cereus (strain 03BB102).